Reading from the N-terminus, the 1131-residue chain is DNA polymerase II large subunit (1131 aa).

This sequence belongs to the archaeal DNA polymerase II family. Heterodimer of a large subunit and a small subunit.

It carries out the reaction DNA(n) + a 2'-deoxyribonucleoside 5'-triphosphate = DNA(n+1) + diphosphate. It catalyses the reaction Exonucleolytic cleavage in the 3'- to 5'-direction to yield nucleoside 5'-phosphates.. Its function is as follows. Possesses two activities: a DNA synthesis (polymerase) and an exonucleolytic activity that degrades single-stranded DNA in the 3'- to 5'-direction. Has a template-primer preference which is characteristic of a replicative DNA polymerase. This Methanococcus maripaludis (strain C5 / ATCC BAA-1333) protein is DNA polymerase II large subunit.